Consider the following 288-residue polypeptide: tRNA pseudouridine synthase A (288 aa).

Asp58 acts as the Nucleophile in catalysis. A substrate-binding site is contributed by Tyr124.

It belongs to the tRNA pseudouridine synthase TruA family. In terms of assembly, homodimer.

It catalyses the reaction uridine(38/39/40) in tRNA = pseudouridine(38/39/40) in tRNA. In terms of biological role, formation of pseudouridine at positions 38, 39 and 40 in the anticodon stem and loop of transfer RNAs. The polypeptide is tRNA pseudouridine synthase A (Corynebacterium diphtheriae (strain ATCC 700971 / NCTC 13129 / Biotype gravis)).